The primary structure comprises 301 residues: MAKSLLKTSSLSGRTKLLHQTGLSLYSTSHGFYEEEVKKTLQQFPGGSIDLQKEDNGIGILTLNNPSKMNAFSGVMMLQLLEKVIELENWTEGKGLIVRGAKNTFSSGSDLNAVKSLGTPEDGMAVCMFMQNTLTRFMRLPLISVALVQGWALGGGAEFTTACDFRLMTPESKIRFVHKEMGIIPSWGGTTRLVEIIGSRQALKVLSGALKLDSKNALNIGMVEEVLQSSDETKSLEEAQEWLKQFIQGPPEVIRALKKSVCSGRELYLEEALQNERDLLGTVWGGPANLEAIAKKGKFNK.

K211 is modified (N6-acetyllysine; alternate). The residue at position 211 (K211) is an N6-succinyllysine; alternate. K295 carries the post-translational modification N6-succinyllysine.

The protein belongs to the enoyl-CoA hydratase/isomerase family.

Its subcellular location is the cytoplasm. It localises to the cytosol. It catalyses the reaction (2S)-ethylmalonyl-CoA + H(+) = butanoyl-CoA + CO2. It carries out the reaction (S)-methylmalonyl-CoA + H(+) = propanoyl-CoA + CO2. The catalysed reaction is (2R)-ethylmalonyl-CoA + H(+) = butanoyl-CoA + CO2. In terms of biological role, decarboxylates ethylmalonyl-CoA, a potentially toxic metabolite, to form butyryl-CoA, suggesting it might be involved in metabolite proofreading. Acts preferentially on (S)-ethylmalonyl-CoA but also has some activity on the (R)-isomer. Also has methylmalonyl-CoA decarboxylase activity at lower level. This Pongo abelii (Sumatran orangutan) protein is Ethylmalonyl-CoA decarboxylase (ECHDC1).